Here is a 473-residue protein sequence, read N- to C-terminus: H(+)/Cl(-) exchange transporter ClcA (473 aa).

Over 1-32 (MKTDTSTFLAQQIVRLRRRDQIRRLMQRDKTP) the chain is Cytoplasmic. The helical transmembrane segment at 33 to 69 (LAILLMAAVVGTLTGLVGVAFEKAVSWVQNMRIGALV) threads the bilayer. The Periplasmic portion of the chain corresponds to 70–76 (QVADHAF). The chain crosses the membrane as a helical span at residues 77–100 (LLWPLAFILSALLAMVGYFLVRKF). The Selectivity filter part_1 signature appears at 106–110 (GSGIP). Ser107 serves as a coordination point for chloride. The segment at residues 109-116 (IPEIEGAL) is an intramembrane region (helical). At 117-123 (EELRPVR) the chain is on the cytoplasmic side. 2 helical membrane-spanning segments follow: residues 124–141 (WWRVLPVKFIGGMGTLGA) and 148–166 (EGPTVQIGGNLGRMVLDVF). A Selectivity filter part_2 motif is present at residues 146–150 (GREGP). At 167-176 (RMRSAEARHT) the chain is on the cytoplasmic side. Intramembrane regions (helical) lie at residues 177–189 (LLATGAAAGLSAA) and 193–201 (PLAGILFII). At 202 to 214 (EEMRPQFRYNLIS) the chain is on the cytoplasmic side. Residues 215-232 (IKAVFTGVIMSSIVFRIF) traverse the membrane as a helical segment. Over 233–252 (NGEAPIIEVGKLSDAPVNTL) the chain is Periplasmic. Residues 253–281 (WLYLILGIIFGCVGPVFNSLVLRTQDMFQ) traverse the membrane as a helical segment. Residues 282–287 (RFHGGE) are Cytoplasmic-facing. The chain crosses the membrane as a helical span at residues 288–309 (IKKWVLMGGAIGGLCGILGLIE). At 310-329 (PEAAGGGFNLIPIAAAGNFS) the chain is on the periplasmic side. 2 consecutive transmembrane segments (helical) span residues 330-349 (VGLLLFIFITRVVTTLLCFS) and 355-376 (GIFAPMLALGTLLGTAFGMAAA). Positions 355-359 (GIFAP) match the Selectivity filter part_3 motif. Positions 356 and 357 each coordinate chloride. Residues 377–386 (VLFPQYHLEA) lie on the Periplasmic side of the membrane. Positions 387–401 (GTFAIAGMGALMAAS) form an intramembrane region, helical. The note=Loop between two helices intramembrane region spans 402 to 404 (VRA). The helical intramembrane region spans 405–416 (PLTGIVLVLEMT). Positions 417-421 (DNYQL) form an intramembrane region, note=Loop between two helices. The chain crosses the membrane as a helical span at residues 422-438 (ILPMIITCLGATLLAQF). The Cytoplasmic portion of the chain corresponds to 439–473 (LGGKPLYSTILARTLAKQDAEQAAKNQNAPAGENT). Residue Tyr445 participates in chloride binding.

The protein belongs to the chloride channel (TC 2.A.49) family. ClcA subfamily. As to quaternary structure, homodimer.

Its subcellular location is the cell inner membrane. The enzyme catalyses 2 chloride(in) + H(+)(out) = 2 chloride(out) + H(+)(in). Proton-coupled chloride transporter. Functions as antiport system and exchanges two chloride ions for 1 proton. Probably acts as an electrical shunt for an outwardly-directed proton pump that is linked to amino acid decarboxylation, as part of the extreme acid resistance (XAR) response. This Salmonella newport (strain SL254) protein is H(+)/Cl(-) exchange transporter ClcA.